The primary structure comprises 753 residues: Probable TonB-dependent siderophore receptor PiuA (753 aa).

The signal sequence occupies residues 1–35; the sequence is MSRQSTDTAVSSQRLLASAIGVAITAIAAPQAAQA. A TBDR plug domain is found at 79–185; the sequence is PLLDTPKTVT…TGGSLNLISK (107 aa). In terms of domain architecture, TBDR beta-barrel spans 190–753; that stretch reads DNFTDAGFTW…TALLGVNFHF (564 aa). Cysteine 420 and cysteine 430 are disulfide-bonded.

Belongs to the TonB-dependent receptor family.

Its subcellular location is the cell outer membrane. Functionally, involved in the initial step of iron uptake by binding iron chelating siderophores, thereby allowing extraction of iron from the environment. Probably involved in the transport of siderophores, including host catecholamines such as dopamine. This is Probable TonB-dependent siderophore receptor PiuA from Pseudomonas aeruginosa (strain ATCC 15692 / DSM 22644 / CIP 104116 / JCM 14847 / LMG 12228 / 1C / PRS 101 / PAO1).